A 1997-amino-acid chain; its full sequence is Otoferlin (1997 aa).

A C2 1 domain is found at 1–98 (MALIVHLKTV…VEENRVEVTD (98 aa)). The Cytoplasmic portion of the chain corresponds to 1–1963 (MALIVHLKTV…ARYFLWHTYR (1963 aa)). The tract at residues 140 to 167 (QEEKDSQETDGLLPGSRPSTRISGEKSF) is disordered. C2 domains follow at residues 235–356 (KRSK…HKWA) and 399–530 (IEGN…FLPT). The interval 643–692 (VDGMSRPLRPRPRKEPGDEEEVDLIQNSSDDEGDEAGDLASVSSTPPMRP) is disordered. Over residues 659-679 (GDEEEVDLIQNSSDDEGDEAG) the composition is skewed to acidic residues. Residues 791–820 (RERLKSCMRELESMGQQAKSLRAQVKRHTV) are a coiled coil. C2 domains are found at residues 943-1068 (LHSF…PPRF) and 1115-1241 (RGPI…PNWN). Ca(2+)-binding residues include Asp975, Asp981, Asp1037, Asp1039, and Asp1045. 3 disordered regions span residues 1253–1272 (LRNG…SMEP), 1296–1326 (DVAE…ESML), and 1343–1402 (LRQH…EKKK). Composition is skewed to acidic residues over residues 1314–1325 (EEPEEEEPDESM) and 1352–1361 (DLEEKEEMES). A compositionally biased stretch (basic and acidic residues) spans 1370-1383 (KSKEKSRAAKEEKK). 2 consecutive C2 domains span residues 1464–1593 (LPED…ATCG) and 1714–1865 (DMPA…KQCT). Residues Asp1508, Asp1514, Asp1563, Asp1565, Asp1571, Asp1836, Ser1839, and Asp1842 each contribute to the Ca(2+) site. The chain crosses the membrane as a helical span at residues 1964 to 1984 (WLLLKFLLLFLLLLLFALFLY). Residues 1985–1997 (SLPGYLAKKILGA) are Extracellular-facing.

This sequence belongs to the ferlin family. Interacts with SNAP25; the interaction is direct. Interacts with STX1; the interaction is direct. Interacts with RAB8B. The cofactor is Ca(2+). As to expression, isoform 1 is expressed in cochlea and brain. Expressed in the cochlear and vestibular hair cells. Expressed in both inner and outer hair cells (IHCs and OHCs) and cochlear ganglions neurons at postnatal day 2 (P2) and 6 (P6). Expressed only in IHCs at postnatal day 60 (P60) (at protein level). Strongly expressed in brain and inner ear. In the inner ear, it is mainly expressed in the cochlear IHC and vestibular type I sensory hair cells. Weakly expressed in eye, heart, skeletal muscle, liver, kidney, lung and testis.

The protein localises to the cytoplasmic vesicle. It is found in the secretory vesicle. It localises to the synaptic vesicle membrane. Its subcellular location is the basolateral cell membrane. The protein resides in the endoplasmic reticulum membrane. The protein localises to the golgi apparatus membrane. It is found in the presynaptic cell membrane. It localises to the cell membrane. Its function is as follows. Key calcium ion sensor involved in the Ca(2+)-triggered synaptic vesicle-plasma membrane fusion and in the control of neurotransmitter release at these output synapses. Interacts in a calcium-dependent manner to the presynaptic SNARE proteins at ribbon synapses of cochlear inner hair cells (IHCs) to trigger exocytosis of neurotransmitter. Also essential to synaptic exocytosis in immature outer hair cells (OHCs). May also play a role within the recycling of endosomes. The polypeptide is Otoferlin (Otof) (Mus musculus (Mouse)).